A 159-amino-acid polypeptide reads, in one-letter code: Small ribosomal subunit protein uS9 (159 aa).

The protein belongs to the universal ribosomal protein uS9 family.

This Rickettsia massiliae (strain Mtu5) protein is Small ribosomal subunit protein uS9.